A 39-amino-acid chain; its full sequence is Bomanin Short 3 (39 aa).

The N-terminal stretch at 1-18 is a signal peptide; it reads MKFLSLAFVLGLLALANA. Residues 19–23 constitute a propeptide that is removed on maturation; that stretch reads TPLNP. Cysteine 32 and cysteine 35 form a disulfide bridge.

This sequence belongs to the bomanin family. In terms of tissue distribution, hemolymph (at protein level).

The protein resides in the secreted. Functionally, secreted immune-induced peptide induced by Toll signaling. Has a role in resistance bacterial and fungal infections. The strength of antimicrobial activity appears to correlate with the overall level of expression. Has no activity against the fungus C.glabrata in vitro. This is Bomanin Short 3 from Drosophila melanogaster (Fruit fly).